Here is a 775-residue protein sequence, read N- to C-terminus: MAQKPDGGAGLRGFQAEASVEDSALLVQTLMEAIQISEAPPTSQATAAASGPNASPQSSQPPTANEKADTEVSAAAARPKTGFKAQNTTTKGPNDYSQARNAKEMPKNQPKVAFKSQNATSKGPHAASDFSHAASTGKSAAKKSEMAFKGQNTTTKAGPSATYNFTQSPSANEMTNNQPKTAKAWNDTTKIPGADAQTQNVNQAKMADVGTSAGISETDGAAAQTSADGSQAQNVESRTIIRGKRTRKINNLNVEENSNGDQRRASLASGNWRSAPVPVTTQNPPGAPPNVLWQTPLAWQNPSGWQNQTARQTPPARQSPPARQTPSAWQNPVAWQNPVIWPNPVIWQNPVIWPNPIVWPGPIVWPNPMAWQSTPGWQSPPSWQAPPSWQSPQDWQGPPDWQLPPDWSMPPDWSFPSDWPFPPDWIPADWPIPPDWQNLRPSPNLRSSPNSRASQNQGPPQPRDVALLQERANKLVKYLMLKDYTKVPIKRSEMLRDIIREYTDVYPEIIERACFVLEKKFGIQLKEIDKEEHLYILISTPESLAGILGTTKDTPKLGLLLVILGIIFMNGNRATEAVLWEALRKMGLRPGVRHPLLGDLRKLLTYEFVKQKYLDYRRVPNSNPPEYEFLWGLRSYHETSKMKVLRFIAEVQKRDPRDWTAQFMEAADEALDALDAAAAEAEARAEARNRMGIGDEAVSGPWSWDDIEFELLTWDEEGDFGDPWSRIPFTFWARYHQNARSRFPQAFTGPIIGPSGTATANFAANFGAIGFFWVE.

Residues 37–330 (SEAPPTSQAT…PARQTPSAWQ (294 aa)) are disordered. Residues 39–50 (APPTSQATAAAS) are compositionally biased toward low complexity. Polar residues-rich tracts occupy residues 52-63 (PNASPQSSQPPT), 84-100 (KAQN…SQAR), 150-180 (GQNT…NQPK), 223-237 (AQTS…NVES), 250-260 (NNLNVEENSNG), and 297-330 (LAWQ…SAWQ). 19 consecutive repeat copies span residues 293-298 (WQTPLA), 299-304 (WQNPSG), 305-310 (WQNQTA), 329-334 (WQNPVA), 335-340 (WQNPVI), 341-346 (WPNPVI), 347-352 (WQNPVI), 353-358 (WPNPIV), 359-364 (WPGPIV), 365-370 (WPNPMA), 371-376 (WQSTPG), 377-382 (WQSPPS), 383-388 (WQAPPS), 389-394 (WQSPQD), 395-400 (WQGPPD), 401-406 (WQLPPD), 407-412 (WSMPPD), 413-418 (WSFPSD), and 419-424 (WPFPPD). Residues 293 to 441 (WQTPLAWQNP…IPPDWQNLRP (149 aa)) are 22 X 6 AA tandem repeats of W-[PQ]-X-P-X-X. Residues 374 to 407 (TPGWQSPPSWQAPPSWQSPQDWQGPPDWQLPPDW) form a disordered region. The segment covering 375–406 (PGWQSPPSWQAPPSWQSPQDWQGPPDWQLPPD) has biased composition (low complexity). The 20; approximate repeat unit spans residues 425 to 429 (WIPAD). 2 consecutive repeat copies span residues 430 to 435 (WPIPPD) and 436 to 441 (WQNLRP). Residues 437 to 452 (QNLRPSPNLRSSPNSR) are compositionally biased toward low complexity. Positions 437-463 (QNLRPSPNLRSSPNSRASQNQGPPQPR) are disordered. Residues 468 to 666 (LQERANKLVK…RDWTAQFMEA (199 aa)) form the MAGE domain.

Interacts with DLX5, DLX7 and MSX2 and forms homomultimers. Interacts with UNC5A. Interacts with TRIM28 and PJA1. Interacts with NGFR/p75NTR and RORA. In terms of tissue distribution, ubiquitous and in the seminiferous tubules expressed in Sertoli cells but not in germ cells. Expression decreases in all tissues with increased age and is detectable only in brain cortex and lung.

It is found in the cytoplasm. The protein resides in the cell membrane. Its subcellular location is the nucleus. Functionally, involved in the apoptotic response after nerve growth factor (NGF) binding in neuronal cells. Inhibits cell cycle progression, and facilitates NGFR-mediated apoptosis. May act as a regulator of the function of DLX family members. May enhance ubiquitin ligase activity of RING-type zinc finger-containing E3 ubiquitin-protein ligases. Proposed to act through recruitment and/or stabilization of the Ubl-conjugating enzyme (E2) at the E3:substrate complex. Plays a role in the circadian rhythm regulation. May act as RORA co-regulator, modulating the expression of core clock genes such as BMAL1 and NFIL3, induced, or NR1D1, repressed. The chain is Melanoma-associated antigen D1 (Maged1) from Rattus norvegicus (Rat).